Consider the following 413-residue polypeptide: Serine hydroxymethyltransferase (413 aa).

(6S)-5,6,7,8-tetrahydrofolate-binding positions include Leu119 and 123–125; that span reads GHL. Position 228 is an N6-(pyridoxal phosphate)lysine (Lys228). 351–353 is a binding site for (6S)-5,6,7,8-tetrahydrofolate; that stretch reads SPF.

Belongs to the SHMT family. In terms of assembly, homodimer. Pyridoxal 5'-phosphate serves as cofactor.

The protein localises to the cytoplasm. It carries out the reaction (6R)-5,10-methylene-5,6,7,8-tetrahydrofolate + glycine + H2O = (6S)-5,6,7,8-tetrahydrofolate + L-serine. Its pathway is one-carbon metabolism; tetrahydrofolate interconversion. It functions in the pathway amino-acid biosynthesis; glycine biosynthesis; glycine from L-serine: step 1/1. In terms of biological role, catalyzes the reversible interconversion of serine and glycine with tetrahydrofolate (THF) serving as the one-carbon carrier. This reaction serves as the major source of one-carbon groups required for the biosynthesis of purines, thymidylate, methionine, and other important biomolecules. Also exhibits THF-independent aldolase activity toward beta-hydroxyamino acids, producing glycine and aldehydes, via a retro-aldol mechanism. This is Serine hydroxymethyltransferase from Lysinibacillus sphaericus (strain C3-41).